The following is a 248-amino-acid chain: 23S rRNA (guanosine-2'-O-)-methyltransferase RlmB (248 aa).

S-adenosyl-L-methionine contacts are provided by G200, I220, and L229.

Belongs to the class IV-like SAM-binding methyltransferase superfamily. RNA methyltransferase TrmH family. RlmB subfamily.

The protein localises to the cytoplasm. The catalysed reaction is guanosine(2251) in 23S rRNA + S-adenosyl-L-methionine = 2'-O-methylguanosine(2251) in 23S rRNA + S-adenosyl-L-homocysteine + H(+). Its function is as follows. Specifically methylates the ribose of guanosine 2251 in 23S rRNA. The chain is 23S rRNA (guanosine-2'-O-)-methyltransferase RlmB from Acinetobacter baylyi (strain ATCC 33305 / BD413 / ADP1).